A 92-amino-acid polypeptide reads, in one-letter code: Small ribosomal subunit protein uS19c (92 aa).

Belongs to the universal ribosomal protein uS19 family.

The protein localises to the plastid. Protein S19 forms a complex with S13 that binds strongly to the 16S ribosomal RNA. The protein is Small ribosomal subunit protein uS19c of Cuscuta gronovii (Common dodder).